The sequence spans 213 residues: High frequency lysogenization protein HflD homolog (213 aa).

Residues 79 to 122 (QGLNAELTRYTLSLMVLERKLSSAKGALNTLGDRINGLQRQLDH) are a coiled coil.

The protein belongs to the HflD family.

Its subcellular location is the cytoplasm. It localises to the cell inner membrane. This Salmonella dublin (strain CT_02021853) protein is High frequency lysogenization protein HflD homolog.